A 1901-amino-acid polypeptide reads, in one-letter code: Methylcytosine dioxygenase tet3 (1901 aa).

Residues 58-99 (SNKKRKRCGVCVPCLRKEPCGACYNCVNRSTSHQICKMRKCE) form a CXXC-type zinc finger. The Zn(2+) site is built by C65, C68, C71, C77, C80, C83, C93, and C98. 4 disordered regions span residues 434 to 455 (KNAL…KKSS), 602 to 658 (WWVP…EGSA), 751 to 787 (KDQC…QNDL), and 808 to 867 (DFSL…PVSR). Polar residues-rich tracts occupy residues 442 to 455 (SPRQ…KKSS) and 602 to 614 (WWVP…PVSK). Positions 640-652 (KPQRKQVQIKKPK) are enriched in basic residues. Positions 758–771 (STHDTSSSSGQGDS) are enriched in low complexity. Positions 847 to 867 (ENSTKPATHSNPALSNNPVSR) are enriched in polar residues. Residues C957, C959, C1017, H1043, and C1045 each coordinate Zn(2+). R1085 is a binding site for 2-oxoglutarate. Zn(2+) is bound by residues C1095, C1097, C1113, C1122, and C1182. A 2-oxoglutarate-binding site is contributed by C1198. Residue H1204 coordinates Zn(2+). 2 residues coordinate Fe cation: H1206 and D1208. H1240 lines the 2-oxoglutarate pocket. 4 disordered regions span residues 1282–1338 (SEPA…QQTK), 1457–1501 (YGSE…VETT), 1591–1624 (SNAP…PGKV), and 1680–1745 (SATP…DEEI). Positions 1291 to 1325 (RQLEAKKAAAEKKKLQKEKLVSPDKTKQEPSDKKT) are enriched in basic and acidic residues. Polar residues predominate over residues 1326 to 1338 (CQQNPGVPQQQTK). A compositionally biased stretch (basic and acidic residues) spans 1465–1474 (SFRRSSEVPH). Polar residues predominate over residues 1477–1487 (SLQNPSSQKSV). Polar residues-rich tracts occupy residues 1680 to 1693 (SATP…TPCS) and 1702 to 1719 (SFPN…SQNH). Position 1780 (H1780) interacts with Fe cation. Position 1795 to 1797 (1795 to 1797 (RIS)) interacts with 2-oxoglutarate.

The protein belongs to the TET family. The cofactor is Fe(2+). Requires Zn(2+) as cofactor.

The protein localises to the nucleus. Its subcellular location is the chromosome. The enzyme catalyses a 5-methyl-2'-deoxycytidine in DNA + 2-oxoglutarate + O2 = a 5-hydroxymethyl-2'-deoxycytidine in DNA + succinate + CO2. The catalysed reaction is a 5-hydroxymethyl-2'-deoxycytidine in DNA + 2-oxoglutarate + O2 = a 5-formyl-2'-deoxycytidine in DNA + succinate + CO2 + H2O. It carries out the reaction a 5-formyl-2'-deoxycytidine in DNA + 2-oxoglutarate + O2 = a 5-carboxyl-2'-deoxycytidine in DNA + succinate + CO2 + H(+). In terms of biological role, dioxygenase that catalyzes the conversion of the modified genomic base 5-methylcytosine (5mC) into 5-hydroxymethylcytosine (5hmC) and plays a key role in epigenetic chromatin reprogramming during embryonic development. Conversion of 5mC into 5hmC probably constitutes the first step in cytosine demethylation. Selectively binds to the promoter region of target genes and contributes to regulate the expression of numerous developmental genes, including pax6, rax, sox9 and six3. May also contribute to the regulation of target genes in ways that do not require its enzyme activity. This Xenopus tropicalis (Western clawed frog) protein is Methylcytosine dioxygenase tet3.